Here is a 475-residue protein sequence, read N- to C-terminus: Deoxyguanosinetriphosphate triphosphohydrolase-like protein (475 aa).

The 155-residue stretch at 118–272 folds into the HD domain; the sequence is RLTHTLEVAQ…MDLSDDIAYS (155 aa).

Belongs to the dGTPase family. Type 2 subfamily.

This Bifidobacterium longum (strain NCC 2705) protein is Deoxyguanosinetriphosphate triphosphohydrolase-like protein (dgt).